The primary structure comprises 66 residues: Large ribosomal subunit protein bL31 (66 aa).

Residues cysteine 16, cysteine 18, cysteine 36, and cysteine 39 each contribute to the Zn(2+) site.

Belongs to the bacterial ribosomal protein bL31 family. Type A subfamily. Part of the 50S ribosomal subunit. Zn(2+) serves as cofactor.

In terms of biological role, binds the 23S rRNA. This chain is Large ribosomal subunit protein bL31, found in Natranaerobius thermophilus (strain ATCC BAA-1301 / DSM 18059 / JW/NM-WN-LF).